We begin with the raw amino-acid sequence, 211 residues long: Protein-methionine-sulfoxide reductase heme-binding subunit MsrQ (211 aa).

Transmembrane regions (helical) follow at residues 10–30 (WLKV…VWAI), 82–102 (LWCF…ELGV), 116–136 (PYLT…FTST), and 153–173 (FVYL…KIIS).

This sequence belongs to the MsrQ family. In terms of assembly, heterodimer of a catalytic subunit (MsrP) and a heme-binding subunit (MsrQ). FMN is required as a cofactor. The cofactor is heme b.

The protein localises to the cell inner membrane. Its function is as follows. Part of the MsrPQ system that repairs oxidized periplasmic proteins containing methionine sulfoxide residues (Met-O), using respiratory chain electrons. Thus protects these proteins from oxidative-stress damage caused by reactive species of oxygen and chlorine generated by the host defense mechanisms. MsrPQ is essential for the maintenance of envelope integrity under bleach stress, rescuing a wide series of structurally unrelated periplasmic proteins from methionine oxidation, including the primary periplasmic chaperone SurA and the lipoprotein Pal. MsrQ provides electrons for reduction to the reductase catalytic subunit MsrP, using the quinone pool of the respiratory chain. In Escherichia coli O157:H7, this protein is Protein-methionine-sulfoxide reductase heme-binding subunit MsrQ.